Here is a 685-residue protein sequence, read N- to C-terminus: Probable transcriptional regulator SLK3 (685 aa).

Disordered stretches follow at residues 25 to 66 (NLPG…ENSY) and 108 to 129 (LQQQRVRQHQQMLQSMSPSQRL). Low complexity predominate over residues 39-56 (QHLPQQQQRQLLEQQAGQ). A dimerization region spans residues 176 to 423 (PAENCITYWR…EHKVGPLEGL (248 aa)). Residues 185–199 (RKFVAEYFSPRAKQR) carry the Nuclear localization signal motif. Residues 447–459 (GNSGAMSGPAQAQ) show a composition bias toward polar residues. 3 disordered regions span residues 447 to 491 (GNSG…MNGS), 512 to 591 (NNQN…NTQE), and 611 to 658 (QQQA…NNLP). Residues 460–471 (MTLSSGTMSGST) are compositionally biased toward low complexity. A compositionally biased stretch (polar residues) spans 512–524 (NNQNSNTGNQEGF). The span at 525–543 (SSQNPTLNSNQSPSSSSQQ) shows a compositional bias: low complexity. Polar residues-rich tracts occupy residues 544–588 (RENL…SHGN), 611–636 (QQQAFPGQSGSNNNTERNTTASTSNI), and 645–658 (RINSFKASSNNNLP).

This sequence belongs to the adn1/SEU family.

Its subcellular location is the nucleus. Its function is as follows. Probable transcription regulator that functions in the development of the carpel margin meristem similarly to SEUSS (SEU). In association with SEU, supports organ development from meristematic regions by facilitating auxin response and thus organ initiation, and by sustaining meristematic potential through the maintenance of PHABULOSA expression. This Arabidopsis thaliana (Mouse-ear cress) protein is Probable transcriptional regulator SLK3 (SLK3).